Here is a 140-residue protein sequence, read N- to C-terminus: Large ribosomal subunit protein uL11 (140 aa).

It belongs to the universal ribosomal protein uL11 family. Part of the ribosomal stalk of the 50S ribosomal subunit. Interacts with L10 and the large rRNA to form the base of the stalk. L10 forms an elongated spine to which L12 dimers bind in a sequential fashion forming a multimeric L10(L12)X complex. One or more lysine residues are methylated.

Its function is as follows. Forms part of the ribosomal stalk which helps the ribosome interact with GTP-bound translation factors. This chain is Large ribosomal subunit protein uL11, found in Desulforapulum autotrophicum (strain ATCC 43914 / DSM 3382 / VKM B-1955 / HRM2) (Desulfobacterium autotrophicum).